The primary structure comprises 308 residues: ADP,ATP carrier protein (308 aa).

Solcar repeat units follow at residues 6–99 (KNFM…FKRM), 110–203 (KWFA…LKPV), and 211–297 (NNFL…LQVI). The next 5 helical transmembrane spans lie at 8 to 35 (FMVD…VKLL), 76 to 100 (TANV…KRMF), 108 to 128 (YWKW…VSLS), 179 to 200 (FNIS…YDSL), and 214 to 234 (LAAF…SYPI). Residues Arg81 and Lys93 each coordinate ADP. Arg238 is a binding site for ADP. The important for transport activity stretch occupies residues 238–243 (RRRMMM). The Nucleotide carrier signature motif signature appears at 238–243 (RRRMMM). A helical transmembrane segment spans residues 274-294 (AGANILRAVAGAGVLAGYDQL).

This sequence belongs to the mitochondrial carrier (TC 2.A.29) family. In terms of assembly, monomer.

The protein resides in the mitochondrion inner membrane. The enzyme catalyses ADP(in) + ATP(out) = ADP(out) + ATP(in). Its activity is regulated as follows. The matrix-open state (m-state) is inhibited by the membrane-permeable bongkrekic acid (BKA). The cytoplasmic-open state (c-state) is inhibited by the membrane-impermeable toxic inhibitor carboxyatractyloside (CATR). Its function is as follows. ADP:ATP antiporter that mediates import of ADP into the mitochondrial matrix for ATP synthesis, and export of ATP out to fuel the cell. Cycles between the cytoplasmic-open state (c-state) and the matrix-open state (m-state): operates by the alternating access mechanism with a single substrate-binding site intermittently exposed to either the cytosolic (c-state) or matrix (m-state) side of the inner mitochondrial membrane. This chain is ADP,ATP carrier protein (ABT), found in Chlamydomonas reinhardtii (Chlamydomonas smithii).